A 77-amino-acid chain; its full sequence is Conotoxin VnMEKL-0111 (77 aa).

A signal peptide spans 1–19 (MEKLTILLLVAAVLMSTQA). The propeptide occupies 20–46 (LIQHDGEKSQKAKMKFLTARTLSAKTR). Intrachain disulfides connect Cys50-Cys66, Cys57-Cys71, and Cys65-Cys75.

The protein belongs to the conotoxin O2 superfamily. As to expression, expressed by the venom duct.

Its subcellular location is the secreted. In Conus ventricosus (Mediterranean cone), this protein is Conotoxin VnMEKL-0111.